The following is a 54-amino-acid chain: Conotoxin vc5c (54 aa).

The signal sequence occupies residues 1-14 (VILLLLIASIPSDA). The propeptide occupies 15-43 (VQLKTKDDMPLASFHGNARRTLQMLSNKR). Glu-50 carries the 4-carboxyglutamate modification. Residue Trp-51 is modified to 6'-bromotryptophan.

Belongs to the conotoxin T superfamily. Contains 2 disulfide bonds that can be either 'C1-C3, C2-C4' or 'C1-C4, C2-C3', since these disulfide connectivities have been observed for conotoxins with cysteine framework V (for examples, see AC P0DQQ7 and AC P81755). As to expression, expressed by the venom duct.

It localises to the secreted. The protein is Conotoxin vc5c of Conus victoriae (Queen Victoria cone).